Reading from the N-terminus, the 530-residue chain is UDP-glucuronosyltransferase 2B15 (530 aa).

A signal peptide spans 1-23 (MSGKWISALLLLQISFCFKSGNC). Residue Asn316 is glycosylated (N-linked (GlcNAc...) asparagine). A helical membrane pass occupies residues 494–510 (VIGFLLSCVAVTVVLAL).

Belongs to the UDP-glycosyltransferase family. Post-translationally, N-glycosylated. Liver. Lower levels seen in the kidney and testis.

It localises to the endoplasmic reticulum membrane. The catalysed reaction is glucuronate acceptor + UDP-alpha-D-glucuronate = acceptor beta-D-glucuronoside + UDP + H(+). The enzyme catalyses 17alpha-estradiol + UDP-alpha-D-glucuronate = 17alpha-estradiol 3-O-(beta-D-glucuronate) + UDP + H(+). It catalyses the reaction 16alpha,17alpha-estriol + UDP-alpha-D-glucuronate = 16alpha,17alpha-estriol 3-O-(beta-D-glucuronate) + UDP + H(+). It carries out the reaction 17beta-hydroxy-5alpha-androstan-3-one + UDP-alpha-D-glucuronate = 5alpha-dihydrotestosterone 17-O-(beta-D-glucuronate) + UDP + H(+). Functionally, UDP-glucuronosyltransferase (UGT) that catalyzes phase II biotransformation reactions in which lipophilic substrates are conjugated with glucuronic acid to increase the metabolite's water solubility, thereby facilitating excretion into either the urine or bile. Essential for the elimination and detoxification of drugs, xenobiotics and endogenous compounds. Catalyzes the glucuronidation of endogenous steroid hormones such as androgens (testosterone, androsterone) and estrogens (estradiol, epiestradiol, estriol, catechol estrogens). Displays glucuronidation activity toward several classes of xenoblotic substrates, including phenolic compounds (eugenol, 4-nitrophenol, 4-hydroxybiphenyl) and phenylpropanoids (naringenin, coumarins). Catalyzes the glucuronidation of monoterpenoid alcohols such as borneol, menthol and isomenthol, a class of natural compounds used in essential oils. This chain is UDP-glucuronosyltransferase 2B15, found in Rattus norvegicus (Rat).